The primary structure comprises 60 residues: Mastoparan-VT3 (60 aa).

The N-terminal stretch at 1 to 27 is a signal peptide; the sequence is MKNTILILFTAFIALLGFFGMSAEALA. AXPX repeat units lie at residues 27-30, 31-34, 35-38, and 41-44; these read ADPK, ADPL, AGPN, and ADPE. Residues 28-45 constitute a propeptide that is removed on maturation; sequence DPKADPLAGPNPDADPEA. Leucine amide is present on L59.

The protein belongs to the MCD family. Mastoparan subfamily. As to expression, expressed by the venom gland.

The protein localises to the secreted. In terms of biological role, the synthetic peptide shows antimicrobial activities against Gram-negative bacteria (but not against all strains tested), Gram-positive bacteria (all strains tested) and the fungi C.albicans and C.parapsilosis. Exhibits moderate hemolytic activity (25% at 100 ug/ml) against washed human erythrocytes. The protein is Mastoparan-VT3 of Vespa tropica (Greater banded hornet).